Consider the following 414-residue polypeptide: Gamma-glutamyl phosphate reductase (414 aa).

The protein belongs to the gamma-glutamyl phosphate reductase family.

It localises to the cytoplasm. It catalyses the reaction L-glutamate 5-semialdehyde + phosphate + NADP(+) = L-glutamyl 5-phosphate + NADPH + H(+). It participates in amino-acid biosynthesis; L-proline biosynthesis; L-glutamate 5-semialdehyde from L-glutamate: step 2/2. Its function is as follows. Catalyzes the NADPH-dependent reduction of L-glutamate 5-phosphate into L-glutamate 5-semialdehyde and phosphate. The product spontaneously undergoes cyclization to form 1-pyrroline-5-carboxylate. This is Gamma-glutamyl phosphate reductase from Francisella philomiragia subsp. philomiragia (strain ATCC 25017 / CCUG 19701 / FSC 153 / O#319-036).